The sequence spans 1233 residues: Glutamate receptor ionotropic, NMDA 2C (1233 aa).

A signal peptide spans 1 to 19; it reads MGGALGPALLLTSLFGAWA. The Extracellular portion of the chain corresponds to 20 to 554; sequence GLGPGQGEQG…SAFLEPYSPA (535 aa). N-linked (GlcNAc...) asparagine glycans are attached at residues asparagine 70 and asparagine 73. A disulfide bridge links cysteine 82 with cysteine 317. Asparagine 337 and asparagine 438 each carry an N-linked (GlcNAc...) asparagine glycan. 2 disulfides stabilise this stretch: cysteine 426/cysteine 453 and cysteine 433/cysteine 454. Positions 509, 511, and 516 each coordinate L-glutamate. N-linked (GlcNAc...) asparagine glycosylation occurs at asparagine 539. Residues 555–575 form a helical membrane-spanning segment; sequence VWVMMFVMCLTVVAITVFMFE. Over 576–598 the chain is Cytoplasmic; it reads YFSPVSYNQNLTRGKKSGGPAFT. Positions 599-611 form an intramembrane region, discontinuously helical; sequence IGKSVWLLWALVF. The interval 601–620 is pore-forming; it reads KSVWLLWALVFNNSVPIENP. The Cytoplasmic portion of the chain corresponds to 612–626; the sequence is NNSVPIENPRGTTSK. A helical membrane pass occupies residues 627 to 644; the sequence is IMVLVWAFFAVIFLASYT. Residues 645–813 lie on the Extracellular side of the membrane; it reads ANLAAFMIQE…EVMSSKLDID (169 aa). N-linked (GlcNAc...) asparagine glycosylation is present at asparagine 685. Positions 687, 688, and 729 each coordinate L-glutamate. The cysteines at positions 743 and 798 are disulfide-linked. The chain crosses the membrane as a helical span at residues 814-836; sequence NMAGVFYMLLVAMGLALLVFAWE. Topologically, residues 837-1233 are cytoplasmic; sequence HLVYWKLRHS…RRISSLESEV (397 aa). Phosphoserine is present on residues serine 875, serine 881, and serine 912. The disordered stretch occupies residues 920–994; the sequence is IENWGGGRRA…GPPLSDVSRV (75 aa). Composition is skewed to pro residues over residues 929–956 and 975–987; these read APPPSPCPTPRSGPSPCLPTPDPPPEPS and PQPPGRPPTPGPP. The short motif at 1231–1233 is the PDZ-binding element; it reads SEV.

The protein belongs to the glutamate-gated ion channel (TC 1.A.10.1) family. NR2C/GRIN2C subfamily. As to quaternary structure, heterotetramer. Forms heterotetrameric channels composed of two GluN1/zeta subunits (GRIN1), and two identical GluN2/epsilon subunits (GRIN2A, GRIN2B, GRIN2C or GRIN2D) or GluN3 subunits (GRIN3A or GRIN3B) (in vitro). In vivo, the subunit composition may depend on the expression levels of the different subunits. Interacts with PDZ domains of PATJ and DLG4. Interacts (via PDZ-binding motif) with SNX27 (via PDZ domain); the interaction is required for recycling to the plasma membrane when endocytosed and prevent degradation in lysosomes. Mainly expressed in brain with predominant expression is in the cerebellum, also present in the hippocampus, amygdala, caudate nucleus, corpus callosum, subthalamic nuclei and thalamus. Detected in the heart, skeletal muscle and pancreas.

It is found in the cell membrane. It localises to the postsynaptic cell membrane. It carries out the reaction Ca(2+)(in) = Ca(2+)(out). The enzyme catalyses Na(+)(in) = Na(+)(out). The catalysed reaction is K(+)(in) = K(+)(out). In terms of biological role, component of N-methyl-D-aspartate (NMDA) receptors (NMDARs) that function as heterotetrameric, ligand-gated cation channels with high calcium permeability and voltage-dependent block by Mg(2+). Participates in synaptic plasticity for learning and memory formation by contributing to the slow phase of excitatory postsynaptic current and long-term synaptic potentiation. Channel activation requires binding of the neurotransmitter L-glutamate to the GluN2 subunit, glycine or D-serine binding to the GluN1 subunit, plus membrane depolarization to eliminate channel inhibition by Mg(2+). NMDARs mediate simultaneously the potasium efflux and the influx of calcium and sodium. Each GluN2 subunit confers differential attributes to channel properties, including activation, deactivation and desensitization kinetics, pH sensitivity, Ca2(+) permeability, and binding to allosteric modulators. This chain is Glutamate receptor ionotropic, NMDA 2C, found in Homo sapiens (Human).